The primary structure comprises 344 residues: Phenylalanine--tRNA ligase alpha subunit (344 aa).

E269 contacts Mg(2+).

The protein belongs to the class-II aminoacyl-tRNA synthetase family. Phe-tRNA synthetase alpha subunit type 1 subfamily. In terms of assembly, tetramer of two alpha and two beta subunits. The cofactor is Mg(2+).

It localises to the cytoplasm. The catalysed reaction is tRNA(Phe) + L-phenylalanine + ATP = L-phenylalanyl-tRNA(Phe) + AMP + diphosphate + H(+). This is Phenylalanine--tRNA ligase alpha subunit from Ralstonia pickettii (strain 12J).